We begin with the raw amino-acid sequence, 314 residues long: Ribonuclease Z (314 aa).

Residues histidine 61, histidine 63, aspartate 65, histidine 66, histidine 137, aspartate 207, and histidine 263 each contribute to the Zn(2+) site. The Proton acceptor role is filled by aspartate 65.

This sequence belongs to the RNase Z family. Homodimer. The cofactor is Zn(2+).

The catalysed reaction is Endonucleolytic cleavage of RNA, removing extra 3' nucleotides from tRNA precursor, generating 3' termini of tRNAs. A 3'-hydroxy group is left at the tRNA terminus and a 5'-phosphoryl group is left at the trailer molecule.. Functionally, zinc phosphodiesterase, which displays some tRNA 3'-processing endonuclease activity. Probably involved in tRNA maturation, by removing a 3'-trailer from precursor tRNA. This Thermococcus kodakarensis (strain ATCC BAA-918 / JCM 12380 / KOD1) (Pyrococcus kodakaraensis (strain KOD1)) protein is Ribonuclease Z.